A 123-amino-acid chain; its full sequence is Holo-[acyl-carrier-protein] synthase (123 aa).

Positions 8 and 56 each coordinate Mg(2+).

It belongs to the P-Pant transferase superfamily. AcpS family. It depends on Mg(2+) as a cofactor.

It is found in the cytoplasm. The enzyme catalyses apo-[ACP] + CoA = holo-[ACP] + adenosine 3',5'-bisphosphate + H(+). In terms of biological role, transfers the 4'-phosphopantetheine moiety from coenzyme A to a Ser of acyl-carrier-protein. The chain is Holo-[acyl-carrier-protein] synthase from Clostridium beijerinckii (strain ATCC 51743 / NCIMB 8052) (Clostridium acetobutylicum).